An 874-amino-acid chain; its full sequence is Alanine--tRNA ligase (874 aa).

4 residues coordinate Zn(2+): His562, His566, Cys665, and His669.

It belongs to the class-II aminoacyl-tRNA synthetase family. Zn(2+) is required as a cofactor.

It is found in the cytoplasm. It catalyses the reaction tRNA(Ala) + L-alanine + ATP = L-alanyl-tRNA(Ala) + AMP + diphosphate. Its function is as follows. Catalyzes the attachment of alanine to tRNA(Ala) in a two-step reaction: alanine is first activated by ATP to form Ala-AMP and then transferred to the acceptor end of tRNA(Ala). Also edits incorrectly charged Ser-tRNA(Ala) and Gly-tRNA(Ala) via its editing domain. In Pseudomonas syringae pv. syringae (strain B728a), this protein is Alanine--tRNA ligase.